The sequence spans 548 residues: SH2B adapter protein 3 (548 aa).

The segment covering M1–T11 has biased composition (polar residues). Disordered regions lie at residues M1 to S25, S78 to P108, and R128 to W160. Low complexity predominate over residues S12–P21. Phosphoserine occurs at positions 13, 102, and 129. Polar residues predominate over residues T137–A148. The 112-residue stretch at E168–G279 folds into the PH domain. Positions P290–G313 are disordered. Phosphoserine is present on S302. An SH2 domain is found at W336 to V434.

This sequence belongs to the SH2B adapter family. Post-translationally, tyrosine phosphorylated.

Its function is as follows. Links T-cell receptor activation signal to phospholipase C-gamma-1, GRB2 and phosphatidylinositol 3-kinase. The sequence is that of SH2B adapter protein 3 (Sh2b3) from Mus musculus (Mouse).